The sequence spans 124 residues: UPF0231 protein Sama_0645 (124 aa).

The protein belongs to the UPF0231 family.

The polypeptide is UPF0231 protein Sama_0645 (Shewanella amazonensis (strain ATCC BAA-1098 / SB2B)).